The following is a 209-amino-acid chain: Redox-sensing transcriptional repressor Rex (209 aa).

The segment at residues 16-55 (LYYRFIQNLSLSGKQRVSSAELSEAVKVDSATIRRDFSYF) is a DNA-binding region (H-T-H motif). 90 to 95 (GVGNLG) contacts NAD(+).

Belongs to the transcriptional regulatory Rex family. Homodimer.

It is found in the cytoplasm. Its function is as follows. Modulates transcription in response to changes in cellular NADH/NAD(+) redox state. The chain is Redox-sensing transcriptional repressor Rex from Bacillus cereus (strain Q1).